Reading from the N-terminus, the 294-residue chain is Elongation factor Ts (294 aa).

Residues 80 to 83 are involved in Mg(2+) ion dislocation from EF-Tu; that stretch reads TDFV.

The protein belongs to the EF-Ts family.

The protein localises to the cytoplasm. In terms of biological role, associates with the EF-Tu.GDP complex and induces the exchange of GDP to GTP. It remains bound to the aminoacyl-tRNA.EF-Tu.GTP complex up to the GTP hydrolysis stage on the ribosome. The polypeptide is Elongation factor Ts (Listeria innocua serovar 6a (strain ATCC BAA-680 / CLIP 11262)).